A 202-amino-acid chain; its full sequence is Imidazoleglycerol-phosphate dehydratase (202 aa).

Belongs to the imidazoleglycerol-phosphate dehydratase family.

The protein resides in the cytoplasm. The catalysed reaction is D-erythro-1-(imidazol-4-yl)glycerol 3-phosphate = 3-(imidazol-4-yl)-2-oxopropyl phosphate + H2O. It participates in amino-acid biosynthesis; L-histidine biosynthesis; L-histidine from 5-phospho-alpha-D-ribose 1-diphosphate: step 6/9. This chain is Imidazoleglycerol-phosphate dehydratase, found in Parasynechococcus marenigrum (strain WH8102).